The primary structure comprises 286 residues: Aquaporin NIP4-1 (286 aa).

The next 2 helical transmembrane spans lie at 59–79 (VMVE…AALM) and 86–106 (LTFP…LSWL). Positions 112–114 (NPA) match the NPA 1 motif. A run of 3 helical transmembrane segments spans residues 133-153 (LYVA…NAVM), 173-193 (LPFL…ATVA), and 201-221 (TVGG…IGPV). Residues 227 to 229 (NPA) carry the NPA 2 motif. The helical transmembrane segment at 241–261 (YDGVWIYVVAPVAGMLVGALC) threads the bilayer.

Belongs to the MIP/aquaporin (TC 1.A.8) family. NIP (TC 1.A.8.12) subfamily. In terms of tissue distribution, expressed in leaves and at lower levels in roots.

Its subcellular location is the membrane. Its function is as follows. Aquaporins facilitate the transport of water and small neutral solutes across cell membranes. In Oryza sativa subsp. japonica (Rice), this protein is Aquaporin NIP4-1 (NIP4-1).